Here is a 512-residue protein sequence, read N- to C-terminus: Ribose import ATP-binding protein RbsA 1 (512 aa).

ABC transporter domains follow at residues 8-244 (FRME…IGRE) and 254-502 (AHRG…LNIA). Residue 40–47 (GENGAGKS) participates in ATP binding.

It belongs to the ABC transporter superfamily. Ribose importer (TC 3.A.1.2.1) family. As to quaternary structure, the complex is composed of an ATP-binding protein (RbsA), two transmembrane proteins (RbsC) and a solute-binding protein (RbsB).

It localises to the cell inner membrane. The enzyme catalyses D-ribose(out) + ATP + H2O = D-ribose(in) + ADP + phosphate + H(+). Its function is as follows. Part of the ABC transporter complex RbsABC involved in ribose import. Responsible for energy coupling to the transport system. In Rhizobium johnstonii (strain DSM 114642 / LMG 32736 / 3841) (Rhizobium leguminosarum bv. viciae), this protein is Ribose import ATP-binding protein RbsA 1.